A 261-amino-acid polypeptide reads, in one-letter code: SLA class II histocompatibility antigen, DQ haplotype C beta chain (261 aa).

Positions 1–31 (MSGMVALRLPRGLWTAALTVMLVVLGAPVAE) are cleaved as a signal peptide. The interval 32–126 (GRDSPQDFVF…IEEGTTLQRR (95 aa)) is beta-1. Residues 32–230 (GRDSPQDFVF…RAQSESAQSK (199 aa)) lie on the Extracellular side of the membrane. Intrachain disulfides connect Cys47–Cys111 and Cys149–Cys205. N-linked (GlcNAc...) asparagine glycosylation occurs at Asn51. The beta-2 stretch occupies residues 127–220 (VQPTVTISPS…SLQNPILVEW (94 aa)). Residues 129–233 (PTVTISPSKA…SESAQSKMLS (105 aa)) enclose the Ig-like C1-type domain. The interval 221–230 (RAQSESAQSK) is connecting peptide. Residues 231 to 251 (MLSGVGGFVLGLIFLGLGLFI) traverse the membrane as a helical segment. At 252–261 (RHRSQKGLVR) the chain is on the cytoplasmic side.

The protein belongs to the MHC class II family.

It is found in the membrane. In Sus scrofa (Pig), this protein is SLA class II histocompatibility antigen, DQ haplotype C beta chain.